The chain runs to 531 residues: Apolipoprotein N-acyltransferase (531 aa).

A run of 7 helical transmembrane segments spans residues 8–28 (IILL…LLAM), 34–54 (FGIF…IDGV), 74–94 (WSFG…AFLV), 105–125 (LAVV…VLVA), 128–148 (LWSD…VAEW), 178–198 (VLNV…PALI), and 206–226 (VGLA…YYRL). Residues 243-493 (VQPVIDQAKK…KGVTDAILPG (251 aa)) form the CN hydrolase domain. Glu-287 functions as the Proton acceptor in the catalytic mechanism. Lys-351 is a catalytic residue. The active-site Nucleophile is Cys-405. The helical transmembrane segment at 501–521 (SMLRGRIFWFTGVFLLLVAAI) threads the bilayer.

The protein belongs to the CN hydrolase family. Apolipoprotein N-acyltransferase subfamily.

It localises to the cell inner membrane. The enzyme catalyses N-terminal S-1,2-diacyl-sn-glyceryl-L-cysteinyl-[lipoprotein] + a glycerophospholipid = N-acyl-S-1,2-diacyl-sn-glyceryl-L-cysteinyl-[lipoprotein] + a 2-acyl-sn-glycero-3-phospholipid + H(+). It functions in the pathway protein modification; lipoprotein biosynthesis (N-acyl transfer). Its function is as follows. Catalyzes the phospholipid dependent N-acylation of the N-terminal cysteine of apolipoprotein, the last step in lipoprotein maturation. This is Apolipoprotein N-acyltransferase from Sinorhizobium fredii (strain NBRC 101917 / NGR234).